The following is a 621-amino-acid chain: 1-deoxy-D-xylulose-5-phosphate synthase (621 aa).

Thiamine diphosphate contacts are provided by residues histidine 80 and 121–123 (GHS). Mg(2+) is bound at residue aspartate 152. Thiamine diphosphate is bound by residues 153 to 154 (GA), asparagine 181, tyrosine 288, and glutamate 370. Residue asparagine 181 coordinates Mg(2+).

It belongs to the transketolase family. DXPS subfamily. Homodimer. The cofactor is Mg(2+). Thiamine diphosphate serves as cofactor.

The catalysed reaction is D-glyceraldehyde 3-phosphate + pyruvate + H(+) = 1-deoxy-D-xylulose 5-phosphate + CO2. Its pathway is metabolic intermediate biosynthesis; 1-deoxy-D-xylulose 5-phosphate biosynthesis; 1-deoxy-D-xylulose 5-phosphate from D-glyceraldehyde 3-phosphate and pyruvate: step 1/1. Its function is as follows. Catalyzes the acyloin condensation reaction between C atoms 2 and 3 of pyruvate and glyceraldehyde 3-phosphate to yield 1-deoxy-D-xylulose-5-phosphate (DXP). The sequence is that of 1-deoxy-D-xylulose-5-phosphate synthase from Shewanella frigidimarina (strain NCIMB 400).